The following is a 319-amino-acid chain: Pre T-cell antigen receptor alpha (319 aa).

The first 16 residues, 1-16, serve as a signal peptide directing secretion; sequence MAESWLLLLLALGCPA. The Extracellular portion of the chain corresponds to 17–160; sequence LPTEVTTLLR…LRGTRALVLR (144 aa). The cysteines at positions 58 and 118 are disulfide-linked. N-linked (GlcNAc...) asparagine glycosylation is present at Asn-78. Residues 161 to 181 form a helical membrane-spanning segment; it reads LGALRLLLFKLLLLDVLLTCG. Topologically, residues 182 to 319 are cytoplasmic; the sequence is RLHAPPAARG…PPADPSFPGG (138 aa). Positions 189 to 207 are enriched in low complexity; the sequence is ARGDPAGASGPGAPSLPAP. The disordered stretch occupies residues 189–293; the sequence is ARGDPAGASG…VLRAWSSGPS (105 aa). Residues 260–271 are compositionally biased toward basic residues; the sequence is RRRRVHTRRPRR.

Heterodimer with TCRB; disulfide linked. This heterodimer assembles with CD3 proteins into a signaling-competent pre-T-cell receptor complex. Interacts with RHBDD1.

It localises to the membrane. It is found in the cell membrane. Functionally, component of the pre-T-cell receptor complex (composed of PTCRA, TCRB and the CD3 complex) that has a crucial role in early T-cell development, particularly alpha-beta T cell differentiation. The polypeptide is Pre T-cell antigen receptor alpha (PTCRA) (Bos taurus (Bovine)).